We begin with the raw amino-acid sequence, 213 residues long: High frequency lysogenization protein HflD (213 aa).

Residues 79–126 (QGLNAELTRYTLSLMVLERKLSSAKGALDTLGNRINGLQRQLEHFDLQ) adopt a coiled-coil conformation.

Belongs to the HflD family. Interacts with CII protein from phage lambda.

Its subcellular location is the cytoplasm. The protein localises to the cell inner membrane. Functionally, negative regulator of phage lambda lysogenization. Contributes to the degradation of the phage regulatory protein CII. Acts probably by holding CII on the membrane surface, away from the target promoters, but close to the FtsH protease. This Escherichia coli O127:H6 (strain E2348/69 / EPEC) protein is High frequency lysogenization protein HflD.